We begin with the raw amino-acid sequence, 676 residues long: XK-related protein 5 (676 aa).

7 helical membrane passes run 37–57 (WLAL…FLWF), 114–134 (LLEA…VFLA), 140–160 (IVPG…LVSY), 206–226 (VWVL…LVAQ), 239–259 (LFNL…WDSP), 266–286 (SFYL…TDFL), and 294–314 (LWTV…LVIY). Disordered stretches follow at residues 336–362 (PIED…DSSS), 372–391 (TSLD…GLGE), 495–538 (LEDN…KEGQ), and 598–661 (PIPG…IQRD). Polar residues predominate over residues 498 to 509 (NATTQKPPATQE).

It belongs to the XK family.

It is found in the cell membrane. In Mus musculus (Mouse), this protein is XK-related protein 5.